The chain runs to 261 residues: Cytochrome c oxidase subunit 3 (261 aa).

Topologically, residues 1-15 (MTHQTHAYHMVNPSP) are mitochondrial matrix. A helical membrane pass occupies residues 16–34 (WPLTGALSALLMTSGLTMW). Over 35–40 (FHYNST) the chain is Mitochondrial intermembrane. A helical transmembrane segment spans residues 41 to 66 (ILLMLGLTTNMLTMYQWWRDIIREST). The Mitochondrial matrix segment spans residues 67 to 72 (FQGHHT). The chain crosses the membrane as a helical span at residues 73–105 (PTVQKGLRYGMILFIISEVLFFTGFFWAFYHSS). Topologically, residues 106–128 (LAPTPELGGCWPPTGIHPLNPLE) are mitochondrial intermembrane. A helical transmembrane segment spans residues 129–152 (VPLLNTSVLLASGVSITWAHHSLM). Topologically, residues 153–155 (EGD) are mitochondrial matrix. The helical transmembrane segment at 156-183 (RNHMLQALFITIALGIYFTLLQASEYYE) threads the bilayer. The Mitochondrial intermembrane portion of the chain corresponds to 184 to 190 (APFTISD). Residues 191–223 (GVYGSTFFVATGFHGLHVIIGSTFLIVCFFRQL) form a helical membrane-spanning segment. Over 224 to 232 (KFHFTSSHH) the chain is Mitochondrial matrix. A helical transmembrane segment spans residues 233–256 (FGFEAAAWYWHFVDVVWLFLYVSI). At 257 to 261 (YWWGS) the chain is on the mitochondrial intermembrane side.

Belongs to the cytochrome c oxidase subunit 3 family. As to quaternary structure, component of the cytochrome c oxidase (complex IV, CIV), a multisubunit enzyme composed of 14 subunits. The complex is composed of a catalytic core of 3 subunits MT-CO1, MT-CO2 and MT-CO3, encoded in the mitochondrial DNA, and 11 supernumerary subunits COX4I, COX5A, COX5B, COX6A, COX6B, COX6C, COX7A, COX7B, COX7C, COX8 and NDUFA4, which are encoded in the nuclear genome. The complex exists as a monomer or a dimer and forms supercomplexes (SCs) in the inner mitochondrial membrane with NADH-ubiquinone oxidoreductase (complex I, CI) and ubiquinol-cytochrome c oxidoreductase (cytochrome b-c1 complex, complex III, CIII), resulting in different assemblies (supercomplex SCI(1)III(2)IV(1) and megacomplex MCI(2)III(2)IV(2)).

Its subcellular location is the mitochondrion inner membrane. The catalysed reaction is 4 Fe(II)-[cytochrome c] + O2 + 8 H(+)(in) = 4 Fe(III)-[cytochrome c] + 2 H2O + 4 H(+)(out). Functionally, component of the cytochrome c oxidase, the last enzyme in the mitochondrial electron transport chain which drives oxidative phosphorylation. The respiratory chain contains 3 multisubunit complexes succinate dehydrogenase (complex II, CII), ubiquinol-cytochrome c oxidoreductase (cytochrome b-c1 complex, complex III, CIII) and cytochrome c oxidase (complex IV, CIV), that cooperate to transfer electrons derived from NADH and succinate to molecular oxygen, creating an electrochemical gradient over the inner membrane that drives transmembrane transport and the ATP synthase. Cytochrome c oxidase is the component of the respiratory chain that catalyzes the reduction of oxygen to water. Electrons originating from reduced cytochrome c in the intermembrane space (IMS) are transferred via the dinuclear copper A center (CU(A)) of subunit 2 and heme A of subunit 1 to the active site in subunit 1, a binuclear center (BNC) formed by heme A3 and copper B (CU(B)). The BNC reduces molecular oxygen to 2 water molecules using 4 electrons from cytochrome c in the IMS and 4 protons from the mitochondrial matrix. This Tragelaphus imberbis (Lesser kudu) protein is Cytochrome c oxidase subunit 3 (MT-CO3).